The sequence spans 376 residues: Lipoprotein p33 (376 aa).

A signal peptide spans 1–30; the sequence is MKIKKIKLLKALALTGAFGIVATVPVIVSS. C31 carries the N-palmitoyl cysteine lipid modification. C31 carries the S-diacylglycerol cysteine lipid modification. Residues 33 to 59 form a disordered region; sequence STDNNGGTGDNNTGGGGSGTDQQQGTT. Positions 38-51 are enriched in gly residues; it reads GGTGDNNTGGGGSG.

Belongs to the p35 lipoprotein family.

It localises to the cell membrane. The sequence is that of Lipoprotein p33 from Malacoplasma penetrans (strain HF-2) (Mycoplasma penetrans).